Reading from the N-terminus, the 156-residue chain is NADH-ubiquinone oxidoreductase chain 6 (156 aa).

The next 5 helical transmembrane spans lie at 1–21 (MILT…YLAS), 24–44 (IVLG…FASF), 49–69 (FAFL…AYFL), 77–97 (ISNF…SALT), and 121–141 (STAP…VIVV).

It belongs to the complex I subunit 6 family.

It is found in the mitochondrion membrane. The enzyme catalyses a ubiquinone + NADH + 5 H(+)(in) = a ubiquinol + NAD(+) + 4 H(+)(out). Its function is as follows. Core subunit of the mitochondrial membrane respiratory chain NADH dehydrogenase (Complex I) that is believed to belong to the minimal assembly required for catalysis. Complex I functions in the transfer of electrons from NADH to the respiratory chain. The immediate electron acceptor for the enzyme is believed to be ubiquinone. The protein is NADH-ubiquinone oxidoreductase chain 6 (ND6) of Lumbricus terrestris (Common earthworm).